We begin with the raw amino-acid sequence, 405 residues long: MQQDDEQEKSQQLQNFQSDDLLEKLKLLNYEKHLLKEFKLKPLSRFYFVKATNPGEQFYMFTLICWWLCKKLGKDMERPQEYDDPNTVAANIIKLLGEIDVPVDFQPNKLIRGAGPICLSVLEVLSTQACKVAQVGYQKLHIAQEEEFLGDYLEDNAEIILEKLEDEQNAAALSDDSDMELEAHNFRQLNWLNRPQKKSNGDVNLDERNPELDARMSDHQEWHLELERVLPQLKVFVKADARDWRTHISQMETLKTNILENSDTAEAQLKKLHSEFTFDLEKIESREKHLNNELKPLIQQFKELSIELSTIQYAQNQLQEDMEKQTAELNEVMMEQELKKEEMERRGQAMSDGSSVQQIRKAIAKLKDDTAQLNLEVALLVHAHDQDIVVRQLQQNQTTDLANNP.

Positions 252–380 (ETLKTNILEN…AQLNLEVALL (129 aa)) form a coiled coil.

This sequence belongs to the IFT57 family.

It localises to the cytoplasm. The protein localises to the cytoskeleton. Its subcellular location is the cilium basal body. Required for the formation of cilia. The sequence is that of Intraflagellar transport protein 57 homolog from Drosophila melanogaster (Fruit fly).